Here is a 222-residue protein sequence, read N- to C-terminus: 7-cyano-7-deazaguanine synthase (222 aa).

9-19 (ISGGMDSALSA) serves as a coordination point for ATP. Residues Cys-188, Cys-196, Cys-199, and Cys-202 each coordinate Zn(2+).

It belongs to the QueC family. It depends on Zn(2+) as a cofactor.

It catalyses the reaction 7-carboxy-7-deazaguanine + NH4(+) + ATP = 7-cyano-7-deazaguanine + ADP + phosphate + H2O + H(+). The protein operates within purine metabolism; 7-cyano-7-deazaguanine biosynthesis. Catalyzes the ATP-dependent conversion of 7-carboxy-7-deazaguanine (CDG) to 7-cyano-7-deazaguanine (preQ(0)). In Sulfurovum sp. (strain NBC37-1), this protein is 7-cyano-7-deazaguanine synthase.